We begin with the raw amino-acid sequence, 374 residues long: Chaperone protein DnaJ (374 aa).

The region spanning 5–70 (DFYEILGLGK…QKRDAYDRYG (66 aa)) is the J domain. The tract at residues 28–47 (LAMKHHPDRNPDSKGAEDKF) is disordered. Basic and acidic residues predominate over residues 35 to 47 (DRNPDSKGAEDKF). The CR-type zinc finger occupies 134–212 (GYDTTIRVPS…CSGAGKIKRN (79 aa)). Zn(2+) is bound by residues C147, C150, C164, C167, C186, C189, C200, and C203. 4 CXXCXGXG motif repeats span residues 147–154 (CETCDGSG), 164–171 (CTTCGGHG), 186–193 (CPKCHGSG), and 200–207 (CTACSGAG).

The protein belongs to the DnaJ family. Homodimer. Zn(2+) serves as cofactor.

The protein localises to the cytoplasm. In terms of biological role, participates actively in the response to hyperosmotic and heat shock by preventing the aggregation of stress-denatured proteins and by disaggregating proteins, also in an autonomous, DnaK-independent fashion. Unfolded proteins bind initially to DnaJ; upon interaction with the DnaJ-bound protein, DnaK hydrolyzes its bound ATP, resulting in the formation of a stable complex. GrpE releases ADP from DnaK; ATP binding to DnaK triggers the release of the substrate protein, thus completing the reaction cycle. Several rounds of ATP-dependent interactions between DnaJ, DnaK and GrpE are required for fully efficient folding. Also involved, together with DnaK and GrpE, in the DNA replication of plasmids through activation of initiation proteins. This chain is Chaperone protein DnaJ, found in Herminiimonas arsenicoxydans.